Here is a 441-residue protein sequence, read N- to C-terminus: MLRSLHSSSSSDTDNNSGGCKNNGGGGGEAAAAVEGGGDQRAVAAAAPSTRDLLLACADLLQRGDLPAARRAAEIVLAAAASPRGDAADRLAYHFARALALRVDAKAGHGHVVVGGGAARPASSGAYLAFNQIAPFLRFAHLTANQAILEAVDGARRVHILDLDAVHGVQWPPLLQAIAERADPALGPPEVRVTGAGADRDTLLRTGNRLRAFARSIHLPFHFTPLLLSCATTAPHHVAGTSTGAAAAASTAAAATGLEFHPDETLAVNCVMFLHNLAGHDELAAFLKWVKAMSPAVVTIAEREAGGGGGGGDHIDDLPRRVGVAMDHYSAVFEALEATVPPGSRERLAVEQEVLGREIEAAVGPSGGRWWRGIERWGGAARAAGFAARPLSAFAVSQARLLLRLHYPSEGYLVQEARGACFLGWQTRPLLSVSAWQPSSS.

Positions 1 to 33 are disordered; the sequence is MLRSLHSSSSSDTDNNSGGCKNNGGGGGEAAAA. The segment covering 7-20 has biased composition (low complexity); the sequence is SSSSSDTDNNSGGC. Positions 21–33 are enriched in gly residues; the sequence is KNNGGGGGEAAAA. The GRAS domain maps to 41–437; the sequence is RAVAAAAPST…RPLLSVSAWQ (397 aa). The tract at residues 48-126 is leucine repeat I (LRI); it reads PSTRDLLLAC…GAARPASSGA (79 aa). The VHIID stretch occupies residues 127-195; sequence YLAFNQIAPF…LGPPEVRVTG (69 aa). Residues 158–162 carry the VHIID motif; it reads VHILD. Positions 205-256 are leucine repeat II (LRII); sequence RTGNRLRAFARSIHLPFHFTPLLLSCATTAPHHVAGTSTGAAAAASTAAAAT. Residues 266-361 form a PFYRE region; sequence LAVNCVMFLH…QEVLGREIEA (96 aa). The segment at 364–437 is SAW; it reads GPSGGRWWRG…RPLLSVSAWQ (74 aa).

The protein belongs to the GRAS family. As to expression, expressed in a small number of epidermal or subepidermal cells at the leaf axils, in axillary meristems and the entire tiller buds. Undetected in the shoot apical meristem.

Its subcellular location is the nucleus. Functionally, putative transcription regulator that controls rice tillering by initiating axillary buds and promoting their outgrowth. Rice tiller is a specialized grain-bearing branch that is formed on the unelongated basal internode and grows independently of the mother stem (culm) by means of its own adventitious roots. The polypeptide is Protein MONOCULM 1 (Oryza sativa subsp. japonica (Rice)).